The primary structure comprises 418 residues: Tektin-1 (418 aa).

Coiled coils occupy residues 21–107 (KNQY…TLKE), 134–177 (HELI…DLKD), 266–308 (NGLK…DQEG), and 333–384 (AQYR…NTIY).

This sequence belongs to the tektin family. Microtubule inner protein component of sperm flagellar doublet microtubules. Post-translationally, ubiquitinated, leading to its degradation. Deubiquitinated by USP16, promoting its stability. In terms of tissue distribution, predominantly expressed in testis. Expressed in airway epithelial cells.

The protein resides in the cytoplasm. It localises to the cytoskeleton. Its subcellular location is the cilium axoneme. It is found in the flagellum axoneme. Microtubule inner protein (MIP) part of the dynein-decorated doublet microtubules (DMTs) in cilia and flagellar axoneme. Forms filamentous polymers in the walls of ciliary and flagellar microtubules. This is Tektin-1 (TEKT1) from Homo sapiens (Human).